A 236-amino-acid chain; its full sequence is UPF0257 lipoprotein YnfC (236 aa).

The first 16 residues, 1–16, serve as a signal peptide directing secretion; sequence MKYKLLPCLLAILLTG. Residue cysteine 17 is the site of N-palmitoyl cysteine attachment. Residue cysteine 17 is the site of S-diacylglycerol cysteine attachment.

This sequence belongs to the UPF0257 family.

The protein localises to the cell membrane. The sequence is that of UPF0257 lipoprotein YnfC from Escherichia coli O127:H6 (strain E2348/69 / EPEC).